Reading from the N-terminus, the 131-residue chain is Small ribosomal subunit protein bS6 (131 aa).

The segment at 98 to 131 is disordered; the sequence is EASPMVKAKDERRERRDDFANETADDAEAGDSEE. Residues 104–116 are compositionally biased toward basic and acidic residues; the sequence is KAKDERRERRDDF. The span at 120–131 shows a compositional bias: acidic residues; that stretch reads TADDAEAGDSEE.

This sequence belongs to the bacterial ribosomal protein bS6 family.

Its function is as follows. Binds together with bS18 to 16S ribosomal RNA. The protein is Small ribosomal subunit protein bS6 of Salmonella dublin (strain CT_02021853).